An 858-amino-acid polypeptide reads, in one-letter code: Chitin synthase 2 (858 aa).

A compositionally biased stretch (basic and acidic residues) spans 1-12 (MYPEGPKPEHDQ). Residues 1 to 116 (MYPEGPKPEH…GQAPRRQPRR (116 aa)) form a disordered region. Residues 15 to 24 (LQDTQFSNQP) are compositionally biased toward polar residues. Composition is skewed to pro residues over residues 52-68 (AYPP…PNFP) and 76-89 (PYPP…PVSP). A run of 7 helical transmembrane segments spans residues 500–517 (RWLN…YHWR), 540–560 (TYNL…FFIL), 586–606 (LHTV…IMAL), 621–641 (MVFF…ITVV), 665–685 (NIII…FMFL), 799–819 (VLAW…TTVI), and 825–845 (ASIY…IRFT).

This sequence belongs to the chitin synthase family.

The protein localises to the cell membrane. It carries out the reaction [(1-&gt;4)-N-acetyl-beta-D-glucosaminyl](n) + UDP-N-acetyl-alpha-D-glucosamine = [(1-&gt;4)-N-acetyl-beta-D-glucosaminyl](n+1) + UDP + H(+). Functionally, polymerizes chitin, a structural polymer of the cell wall and septum, by transferring the sugar moiety of UDP-GlcNAc to the non-reducing end of the growing chitin polymer. The protein is Chitin synthase 2 (CHS2) of Rhizopus oligosporus (Rhizopus microsporus var. oligosporus).